The following is a 1497-amino-acid chain: ABC multidrug transporter C (1497 aa).

The span at 1–13 shows a compositional bias: polar residues; that stretch reads MSLLGTINPNINP. Residues 1–21 are disordered; it reads MSLLGTINPNINPERTVAGRG. 2 N-linked (GlcNAc...) asparagine glycosylation sites follow: asparagine 137 and asparagine 336. One can recognise an ABC transporter 1 domain in the interval 158–412; that stretch reads LEVGTLVRRI…FTNMGFECPE (255 aa). The next 5 membrane-spanning stretches (helical) occupy residues 523-543, 557-577, 599-621, 632-652, and 665-685; these read LTMSQLIGNFIMALVIGSVFY, ALLFFAVLLNAFSSALEILTL, AIASMLCDMPYKITNAIIFNLTL, GAFFVFLLFSFVTTLTMSMLF, and ALVPAAILILGLVIYTGFTIP. N-linked (GlcNAc...) asparagine glycosylation occurs at asparagine 762. The chain crosses the membrane as a helical span at residues 777–797; the sequence is GIMFGFMFFFMFTYLTATEYI. A disordered region spans residues 815–843; that stretch reads QPTGSHDVEKSPEVSSAAKTDEASSKEAT. The ABC transporter 2 domain occupies 853–1096; sequence FQWKDVCYDI…LASYFERNGA (244 aa). 889–896 is a binding site for ATP; sequence GVSGAGKT. 5 consecutive transmembrane segments (helical) span residues 1192 to 1212, 1226 to 1246, 1273 to 1293, 1313 to 1333, and 1352 to 1372; these read YIYSKTALCVLTALYIGFSFF, FSIFMLMTIFGNLVQQIMPNF, IIVELPWNTLMAFLIFVCWYY, LMFLLIWSFLLFTSTFAHMMI, and LCLIFCGVLAPPQSLPGFWIF. A glycan (N-linked (GlcNAc...) asparagine) is linked at asparagine 1411. Residues 1464–1484 traverse the membrane as a helical segment; the sequence is FGIMWAYIIFNIFAAVFIYWL.

It belongs to the ABC transporter superfamily. ABCG family. PDR (TC 3.A.1.205) subfamily.

The protein localises to the cell membrane. The catalysed reaction is fluconazole(in) + ATP + H2O = fluconazole(out) + ADP + phosphate + H(+). It catalyses the reaction itraconazole(in) + ATP + H2O = itraconazole(out) + ADP + phosphate + H(+). It carries out the reaction voriconazole(in) + ATP + H2O = voriconazole(out) + ADP + phosphate + H(+). With respect to regulation, the efflux inhibitor FK506 impairs the transport activity. Functionally, pleiotropic ABC efflux transporter that shows a strong substrate specificity for the azole class of drugs such as lotrimazole (CLT), fluconazole (FLC), itraconazole (ITC), ketoconazole (KTC), posaconazole (POS), tebuconazole (TEBZ), and voriconazole (VRC). Is also able to transport rhodamine 6G (R-6G), a known substrate for many ABC transporters. Required for normal pathogenesis in a Galleria mellonella (greater wax moth) infection model. This is ABC multidrug transporter C from Aspergillus fumigatus (strain ATCC MYA-4609 / CBS 101355 / FGSC A1100 / Af293) (Neosartorya fumigata).